Consider the following 384-residue polypeptide: Erythronate-4-phosphate dehydrogenase (384 aa).

Residues serine 45 and threonine 66 each coordinate substrate. NAD(+) contacts are provided by aspartate 147 and threonine 177. Arginine 210 is a catalytic residue. Aspartate 234 is an NAD(+) binding site. The active site involves glutamate 239. Histidine 256 functions as the Proton donor in the catalytic mechanism. Glycine 259 contributes to the NAD(+) binding site. Residue tyrosine 260 participates in substrate binding.

Belongs to the D-isomer specific 2-hydroxyacid dehydrogenase family. PdxB subfamily. As to quaternary structure, homodimer.

The protein localises to the cytoplasm. The catalysed reaction is 4-phospho-D-erythronate + NAD(+) = (R)-3-hydroxy-2-oxo-4-phosphooxybutanoate + NADH + H(+). It participates in cofactor biosynthesis; pyridoxine 5'-phosphate biosynthesis; pyridoxine 5'-phosphate from D-erythrose 4-phosphate: step 2/5. Its function is as follows. Catalyzes the oxidation of erythronate-4-phosphate to 3-hydroxy-2-oxo-4-phosphonooxybutanoate. The sequence is that of Erythronate-4-phosphate dehydrogenase from Marinobacter nauticus (strain ATCC 700491 / DSM 11845 / VT8) (Marinobacter aquaeolei).